The sequence spans 107 residues: Small ribosomal subunit protein bS18c (107 aa).

The segment covering 85–95 (KKAQRFKRRQS) has biased composition (basic residues). The segment at 85-107 (KKAQRFKRRQSTARTVGLRTRNK) is disordered.

This sequence belongs to the bacterial ribosomal protein bS18 family. Part of the 30S ribosomal subunit.

The protein localises to the plastid. Its subcellular location is the chloroplast. This chain is Small ribosomal subunit protein bS18c, found in Oenothera argillicola (Appalachian evening primrose).